The primary structure comprises 409 residues: 3-isopropylmalate dehydrogenase 1, chloroplastic (409 aa).

The transit peptide at 1 to 37 (MAAFLQTNISLNAIKIVPGKYSSLTDHQFRAPYRIRC) directs the protein to the chloroplast. Position 74 is a phosphoserine (S74). 118–133 (IGGYKWDKNEKHLRPE) contacts NAD(+). Positions 140, 150, and 178 each coordinate substrate. N238 is a binding site for NAD(+). D268 provides a ligand contact to substrate. D268 provides a ligand contact to Mg(2+). N269 is a binding site for NAD(+). The Mg(2+) site is built by D292 and D296. Residue 322–338 (EPIHGSAPDIAGQDKAN) participates in NAD(+) binding.

It belongs to the isocitrate and isopropylmalate dehydrogenases family. In terms of assembly, homodimer. Mg(2+) serves as cofactor. The cofactor is Mn(2+). Highly expressed in seedlings, leaves, stems and roots and, to a lower extent, in flowers, pollen and siliques.

It localises to the plastid. It is found in the chloroplast stroma. The catalysed reaction is (2R,3S)-3-isopropylmalate + NAD(+) = 4-methyl-2-oxopentanoate + CO2 + NADH. It participates in amino-acid biosynthesis; L-leucine biosynthesis; L-leucine from 3-methyl-2-oxobutanoate: step 3/4. Its pathway is secondary metabolite biosynthesis. Regulated by a thiol-based redox modification; oxidation by CuCl(2) leads to a decreased activity. Functionally, involved in both glucosinolate and leucine biosynthesis; catalyzes the oxidative decarboxylation step in both leucine biosynthesis (primary metabolism) and methionine chain elongation of glucosinolates (specialized metabolism). Catalyzes the oxidation of 3-carboxy-2-hydroxy-4-methylpentanoate (3-isopropylmalate, 3-IPM) to 3-carboxy-4-methyl-2-oxopentanoate. The product decarboxylates to 4-methyl-2 oxopentanoate. Required during pollen development and involved in embryo sac development. More active on 3-isopropylmalate and NAD(+) than towards D-malate. The protein is 3-isopropylmalate dehydrogenase 1, chloroplastic of Arabidopsis thaliana (Mouse-ear cress).